Here is a 559-residue protein sequence, read N- to C-terminus: Berberine bridge enzyme-like A (559 aa).

A signal peptide spans 1–21 (MFPLIILISFSLASLSETATG). N25 and N37 each carry an N-linked (GlcNAc...) asparagine glycan. C29 and C86 are joined by a disulfide. In terms of domain architecture, FAD-binding PCMH-type spans 64-240 (FMPKPTFIIL…YAWKIRLLKV (177 aa)). H101 is modified (pros-8alpha-FAD histidine). N-linked (GlcNAc...) asparagine glycans are attached at residues N321, N355, and N494.

The protein belongs to the oxygen-dependent FAD-linked oxidoreductase family. Requires FAD as cofactor. Mostly expressed in roots.

The protein resides in the vacuole. The protein operates within alkaloid biosynthesis; nicotine biosynthesis. Functionally, involved in the biosynthesis of pyridine alkaloid natural products, leading mainly to the production of anabasine, anatabine, nicotine and nornicotine, effective deterrents against herbivores with antiparasitic and pesticide properties (neurotoxins); nornicotine serves as the precursor in the synthesis of the carcinogen compound N'-nitrosonornicotine (NNN). Catalyzes a late oxidation step subsequent to the pyridine ring condensation reaction in the biosynthesis of alkaloids. This chain is Berberine bridge enzyme-like A, found in Nicotiana tabacum (Common tobacco).